A 362-amino-acid chain; its full sequence is Porin Omp2b (362 aa).

A signal peptide spans 1–22 (MNIKSLLLGSAAALVAASGAQA).

Belongs to the alphaproteobacteria porin family. As to quaternary structure, homotrimer.

Its subcellular location is the cell outer membrane. Functionally, forms passive diffusion pores that allow small molecular weight hydrophilic materials across the outer membrane. The chain is Porin Omp2b (omp2b) from Brucella melitensis biotype 1 (strain ATCC 23456 / CCUG 17765 / NCTC 10094 / 16M).